A 550-amino-acid polypeptide reads, in one-letter code: Probable methionine--tRNA ligase, cytoplasmic (550 aa).

The short motif at 10-20 (PYVNNQPHLGN) is the 'HIGH' region element. A 'KMSKS' region motif is present at residues 328 to 332 (KFSKS). Lysine 331 serves as a coordination point for ATP.

Belongs to the class-I aminoacyl-tRNA synthetase family.

It localises to the cytoplasm. The enzyme catalyses tRNA(Met) + L-methionine + ATP = L-methionyl-tRNA(Met) + AMP + diphosphate. The sequence is that of Probable methionine--tRNA ligase, cytoplasmic from Encephalitozoon cuniculi (strain GB-M1) (Microsporidian parasite).